The sequence spans 248 residues: Phosphoadenosine 5'-phosphosulfate reductase (248 aa).

The Nucleophile; cysteine thiosulfonate intermediate role is filled by Cys239.

The protein belongs to the PAPS reductase family. CysH subfamily.

Its subcellular location is the cytoplasm. It carries out the reaction [thioredoxin]-disulfide + sulfite + adenosine 3',5'-bisphosphate + 2 H(+) = [thioredoxin]-dithiol + 3'-phosphoadenylyl sulfate. It participates in sulfur metabolism; hydrogen sulfide biosynthesis; sulfite from sulfate: step 3/3. Its function is as follows. Catalyzes the formation of sulfite from phosphoadenosine 5'-phosphosulfate (PAPS) using thioredoxin as an electron donor. The chain is Phosphoadenosine 5'-phosphosulfate reductase from Alteromonas mediterranea (strain DSM 17117 / CIP 110805 / LMG 28347 / Deep ecotype).